We begin with the raw amino-acid sequence, 189 residues long: MKRVLFFLLMIFVSFGVIADCEIQAKDHDCFTIFAKGTIFSAFPVLNNKAMWRWYQNEDIGEYYWQTELGTCKNNKFTPSGARLLIRVGSLRLNENHAIKGTLQELINTAEKTAFLGDRFRSYIRAGIYQKKSSDPVQLLAVLDNSIMVKYFKDEKPTYARMTAHLPNKNESYECLIKIQHELIRSEEK.

Residues M1 to A19 form the signal peptide.

This is an uncharacterized protein from Escherichia coli (strain K12).